The sequence spans 376 residues: Erythronate-4-phosphate dehydrogenase (376 aa).

Positions 45 and 67 each coordinate substrate. Asp-147 serves as a coordination point for NAD(+). Arg-209 is an active-site residue. NAD(+) is bound at residue Asp-233. Glu-238 is a catalytic residue. The active-site Proton donor is the His-255. Gly-258 serves as a coordination point for NAD(+). Tyr-259 contributes to the substrate binding site.

Belongs to the D-isomer specific 2-hydroxyacid dehydrogenase family. PdxB subfamily. In terms of assembly, homodimer.

Its subcellular location is the cytoplasm. It carries out the reaction 4-phospho-D-erythronate + NAD(+) = (R)-3-hydroxy-2-oxo-4-phosphooxybutanoate + NADH + H(+). The protein operates within cofactor biosynthesis; pyridoxine 5'-phosphate biosynthesis; pyridoxine 5'-phosphate from D-erythrose 4-phosphate: step 2/5. Catalyzes the oxidation of erythronate-4-phosphate to 3-hydroxy-2-oxo-4-phosphonooxybutanoate. In Shewanella baltica (strain OS195), this protein is Erythronate-4-phosphate dehydrogenase.